A 79-amino-acid polypeptide reads, in one-letter code: uncharacterized protein (79 aa).

The signal sequence occupies residues 1–19 (MKYVALAFVLSLVILQISA).

In terms of tissue distribution, nacreous layer of shell (at protein level). Expressed primarily in the mantle with highest level in the mantle pallium and lower level in the mantle edge.

It is found in the secreted. This is an uncharacterized protein from Pinctada maxima (Silver-lipped pearl oyster).